The sequence spans 498 residues: ATP synthase subunit beta, chloroplastic (498 aa).

Position 172 to 179 (172 to 179) interacts with ATP; that stretch reads GGAGVGKT.

Belongs to the ATPase alpha/beta chains family. F-type ATPases have 2 components, CF(1) - the catalytic core - and CF(0) - the membrane proton channel. CF(1) has five subunits: alpha(3), beta(3), gamma(1), delta(1), epsilon(1). CF(0) has four main subunits: a(1), b(1), b'(1) and c(9-12).

It is found in the plastid. Its subcellular location is the chloroplast thylakoid membrane. It catalyses the reaction ATP + H2O + 4 H(+)(in) = ADP + phosphate + 5 H(+)(out). Produces ATP from ADP in the presence of a proton gradient across the membrane. The catalytic sites are hosted primarily by the beta subunits. In Salacca zalacca (Snake palm), this protein is ATP synthase subunit beta, chloroplastic.